The following is a 224-amino-acid chain: tRNA pseudouridine synthase B (224 aa).

Aspartate 46 acts as the Nucleophile in catalysis.

It belongs to the pseudouridine synthase TruB family. Type 1 subfamily.

It catalyses the reaction uridine(55) in tRNA = pseudouridine(55) in tRNA. Its function is as follows. Responsible for synthesis of pseudouridine from uracil-55 in the psi GC loop of transfer RNAs. This Methylococcus capsulatus (strain ATCC 33009 / NCIMB 11132 / Bath) protein is tRNA pseudouridine synthase B.